The chain runs to 247 residues: Probable transcriptional regulatory protein PMT_1423 (247 aa).

Belongs to the TACO1 family.

The protein localises to the cytoplasm. The sequence is that of Probable transcriptional regulatory protein PMT_1423 from Prochlorococcus marinus (strain MIT 9313).